The primary structure comprises 858 residues: DNA mismatch repair protein MutS (858 aa).

Residue 613–620 coordinates ATP; it reads GPNMAGKS.

This sequence belongs to the DNA mismatch repair MutS family.

Functionally, this protein is involved in the repair of mismatches in DNA. It is possible that it carries out the mismatch recognition step. This protein has a weak ATPase activity. The polypeptide is DNA mismatch repair protein MutS (Dehalococcoides mccartyi (strain ATCC BAA-2100 / JCM 16839 / KCTC 5957 / BAV1)).